The sequence spans 122 residues: Large ribosomal subunit protein uL14 (122 aa).

Belongs to the universal ribosomal protein uL14 family. In terms of assembly, part of the 50S ribosomal subunit. Forms a cluster with proteins L3 and L19. In the 70S ribosome, L14 and L19 interact and together make contacts with the 16S rRNA in bridges B5 and B8.

Functionally, binds to 23S rRNA. Forms part of two intersubunit bridges in the 70S ribosome. The chain is Large ribosomal subunit protein uL14 from Clostridium botulinum (strain Alaska E43 / Type E3).